The following is a 134-amino-acid chain: Small ribosomal subunit protein uS8c (134 aa).

The protein belongs to the universal ribosomal protein uS8 family. In terms of assembly, part of the 30S ribosomal subunit.

The protein resides in the plastid. It is found in the chloroplast. In terms of biological role, one of the primary rRNA binding proteins, it binds directly to 16S rRNA central domain where it helps coordinate assembly of the platform of the 30S subunit. The protein is Small ribosomal subunit protein uS8c (rps8) of Chloranthus spicatus (Chulantree).